The chain runs to 566 residues: Serine/threonine-protein kinase PknE (566 aa).

The Cytoplasmic segment spans residues 1–337 (MDGTAESREG…PLPRSARQPW (337 aa)). Ser7 is modified (phosphoserine; by autocatalysis). A Phosphothreonine; by autocatalysis modification is found at Thr11. The 260-residue stretch at 16–275 (YRLRRLVGRG…DLSAAAHAAL (260 aa)) folds into the Protein kinase domain. ATP is bound by residues 22 to 30 (VGRGGMGDV) and Lys45. Thr50 and Thr59 each carry phosphothreonine; by autocatalysis. Catalysis depends on Asp139, which acts as the Proton acceptor. 3 positions are modified to phosphothreonine; by autocatalysis: Thr170, Thr175, and Thr178. The tract at residues 296–330 (PVPSTHPVSPGTRWPQPTPWAGGAPPWGPPSSPLP) is disordered. The helical transmembrane segment at 338-358 (LWVGVAVAVVVALAGGLGIAL) threads the bilayer. The Extracellular portion of the chain corresponds to 359–566 (AHPWRSSGPR…DPSWLARLIG (208 aa)).

Belongs to the protein kinase superfamily. Ser/Thr protein kinase family. Homodimer. Autophosphorylated on serine and threonine residues. Dephosphorylated by PstP.

It is found in the cell membrane. It carries out the reaction L-seryl-[protein] + ATP = O-phospho-L-seryl-[protein] + ADP + H(+). The catalysed reaction is L-threonyl-[protein] + ATP = O-phospho-L-threonyl-[protein] + ADP + H(+). A serine/threonine-protein kinase, acts on HupB in vitro, modifying at least 2 Ser and 8 Thr residues. Important for bacterial survival in the host during infection. This chain is Serine/threonine-protein kinase PknE, found in Mycobacterium tuberculosis (strain ATCC 25177 / H37Ra).